A 132-amino-acid polypeptide reads, in one-letter code: Secreted RxLR effector protein RXLR-C22 (132 aa).

Positions 1–21 (MRSLVWAVIATLIVLTPFSEA) are cleaved as a signal peptide. Residues 56 to 74 (RKLQSDSVKKGDSTGLEER) carry the RxLR-dEER motif. Asn116 is a glycosylation site (N-linked (GlcNAc...) asparagine).

It belongs to the RxLR effector family.

The protein localises to the secreted. It is found in the host Golgi apparatus. Functionally, secreted effector that does not suppress pattern-triggered immunity (PTI) in plant host. In Plasmopara halstedii (Downy mildew of sunflower), this protein is Secreted RxLR effector protein RXLR-C22.